The primary structure comprises 208 residues: MKIVEVKHPLVKHKLGLMRETDISTKRFRELASEVGSLLTYEATADLETEKVTIEGWNGPVEVDQIKGKKITVVPILRAGLGMMEGVLENVPSARISVVGMYRNEETLEPVPYFQKLVSNIDERMALIVDPMLATGGSVIATIDLLKKAGCSSIKVLVLVAAPEGIAALEKAHPDVELYTASIDQGLNEHGYIIPGLGDAGDKIFGTK.

5-phospho-alpha-D-ribose 1-diphosphate-binding positions include R78, R103, and 130–138; that span reads DPMLATGGS. Residues I193 and 198 to 200 each bind uracil; that span reads GDA. D199 is a 5-phospho-alpha-D-ribose 1-diphosphate binding site.

The protein belongs to the UPRTase family. Mg(2+) is required as a cofactor.

The enzyme catalyses UMP + diphosphate = 5-phospho-alpha-D-ribose 1-diphosphate + uracil. It participates in pyrimidine metabolism; UMP biosynthesis via salvage pathway; UMP from uracil: step 1/1. With respect to regulation, allosterically activated by GTP. Functionally, catalyzes the conversion of uracil and 5-phospho-alpha-D-ribose 1-diphosphate (PRPP) to UMP and diphosphate. The protein is Uracil phosphoribosyltransferase of Escherichia fergusonii (strain ATCC 35469 / DSM 13698 / CCUG 18766 / IAM 14443 / JCM 21226 / LMG 7866 / NBRC 102419 / NCTC 12128 / CDC 0568-73).